The following is a 199-amino-acid chain: Protein-methionine-sulfoxide reductase heme-binding subunit MsrQ (199 aa).

5 helical membrane passes run 10-30 (WLKVAIWLAAALPFLWLILSV), 79-99 (LLGLWCFAWGTLHLVSYSVLE), 118-138 (LTLGIISWLLLLSLAVTSTLW), 147-167 (WQKLHNLVYVVAILAPIHYLW), and 169-189 (VKTLSPLPIIYAVTAAILLAL).

Belongs to the MsrQ family. Heterodimer of a catalytic subunit (MsrP) and a heme-binding subunit (MsrQ). Requires FMN as cofactor. Heme b serves as cofactor.

The protein localises to the cell inner membrane. In terms of biological role, part of the MsrPQ system that repairs oxidized periplasmic proteins containing methionine sulfoxide residues (Met-O), using respiratory chain electrons. Thus protects these proteins from oxidative-stress damage caused by reactive species of oxygen and chlorine generated by the host defense mechanisms. MsrPQ is essential for the maintenance of envelope integrity under bleach stress, rescuing a wide series of structurally unrelated periplasmic proteins from methionine oxidation. MsrQ provides electrons for reduction to the reductase catalytic subunit MsrP, using the quinone pool of the respiratory chain. The chain is Protein-methionine-sulfoxide reductase heme-binding subunit MsrQ from Yersinia enterocolitica serotype O:8 / biotype 1B (strain NCTC 13174 / 8081).